The sequence spans 258 residues: Cell division protein ZapD (258 aa).

This sequence belongs to the ZapD family. As to quaternary structure, interacts with FtsZ.

Its subcellular location is the cytoplasm. Its function is as follows. Cell division factor that enhances FtsZ-ring assembly. Directly interacts with FtsZ and promotes bundling of FtsZ protofilaments, with a reduction in FtsZ GTPase activity. This chain is Cell division protein ZapD, found in Coxiella burnetii (strain RSA 331 / Henzerling II).